Consider the following 298-residue polypeptide: Aspartate carbamoyltransferase catalytic subunit (298 aa).

Carbamoyl phosphate contacts are provided by Arg50 and Thr51. Lys79 is a binding site for L-aspartate. 3 residues coordinate carbamoyl phosphate: Arg100, His128, and Gln131. Positions 160 and 221 each coordinate L-aspartate. Residues Leu260 and Pro261 each coordinate carbamoyl phosphate.

This sequence belongs to the aspartate/ornithine carbamoyltransferase superfamily. ATCase family. In terms of assembly, heterooligomer of catalytic and regulatory chains.

The catalysed reaction is carbamoyl phosphate + L-aspartate = N-carbamoyl-L-aspartate + phosphate + H(+). The protein operates within pyrimidine metabolism; UMP biosynthesis via de novo pathway; (S)-dihydroorotate from bicarbonate: step 2/3. Functionally, catalyzes the condensation of carbamoyl phosphate and aspartate to form carbamoyl aspartate and inorganic phosphate, the committed step in the de novo pyrimidine nucleotide biosynthesis pathway. This Methanoculleus marisnigri (strain ATCC 35101 / DSM 1498 / JR1) protein is Aspartate carbamoyltransferase catalytic subunit.